The following is a 156-amino-acid chain: Lipoprotein signal peptidase (156 aa).

Residues 62 to 82 (GNTVFMVLSAVIIAILSYTKI) traverse the membrane as a helical segment. Catalysis depends on residues D115 and D133. Residues 126-146 (WPAFNLADLTITCGVIVFLAM) form a helical membrane-spanning segment.

The protein belongs to the peptidase A8 family.

The protein localises to the cell inner membrane. It carries out the reaction Release of signal peptides from bacterial membrane prolipoproteins. Hydrolyzes -Xaa-Yaa-Zaa-|-(S,diacylglyceryl)Cys-, in which Xaa is hydrophobic (preferably Leu), and Yaa (Ala or Ser) and Zaa (Gly or Ala) have small, neutral side chains.. Its pathway is protein modification; lipoprotein biosynthesis (signal peptide cleavage). Its function is as follows. This protein specifically catalyzes the removal of signal peptides from prolipoproteins. This is Lipoprotein signal peptidase from Anaplasma phagocytophilum (strain HZ).